The sequence spans 369 residues: Superinfection exclusion protein (369 aa).

Residues 1–15 form the signal peptide; sequence MIALLILSLTCSVST.

This sequence belongs to the serpin family. Orthopoxvirus OPG040 subfamily. In terms of assembly, interacts with A56 protein.

The protein resides in the virion membrane. It localises to the host cell membrane. Functionally, prevents cell to cell fusion via its interaction with A56 protein. The A56-K2 complex associates with components of the entry fusion complex (EFC) presumably to avoid superinfection and syncytium formation. The chain is Superinfection exclusion protein (OPG040) from Vaccinia virus (strain Copenhagen) (VACV).